Reading from the N-terminus, the 476-residue chain is Glycogen synthase (476 aa).

Lys-15 is a binding site for ADP-alpha-D-glucose.

This sequence belongs to the glycosyltransferase 1 family. Bacterial/plant glycogen synthase subfamily.

The enzyme catalyses [(1-&gt;4)-alpha-D-glucosyl](n) + ADP-alpha-D-glucose = [(1-&gt;4)-alpha-D-glucosyl](n+1) + ADP + H(+). The protein operates within glycan biosynthesis; glycogen biosynthesis. Synthesizes alpha-1,4-glucan chains using ADP-glucose. The polypeptide is Glycogen synthase (Bacillus anthracis).